We begin with the raw amino-acid sequence, 288 residues long: Alpha/beta hydrolase domain-containing protein 17B (288 aa).

Residues S170, D235, and H264 each act as charge relay system in the active site.

Belongs to the AB hydrolase superfamily. ABHD17 family. Palmitoylated on cysteine residues located in a cysteine cluster at the N-terminus which promotes membrane localization.

The protein resides in the cell membrane. Its subcellular location is the recycling endosome membrane. It is found in the cell projection. It localises to the dendritic spine. The protein localises to the postsynaptic density membrane. It carries out the reaction S-hexadecanoyl-L-cysteinyl-[protein] + H2O = L-cysteinyl-[protein] + hexadecanoate + H(+). Functionally, hydrolyzes fatty acids from S-acylated cysteine residues in proteins. Has depalmitoylating activity towards NRAS. The protein is Alpha/beta hydrolase domain-containing protein 17B of Gallus gallus (Chicken).